The primary structure comprises 560 residues: uncharacterized protein (560 aa).

Helical transmembrane passes span 9–29 (LVITILLIVLGANWLLSSFLL), 61–81 (ILVPTGFPLTTGLGLSLKYKI), 136–156 (IGIANSIATVEGFTLSLASMM), 305–325 (SLQIWGKLFAVLLHGGSASFI), and 442–462 (VVLELYCPYAIMGPVAHTNFY).

Its subcellular location is the membrane. This is an uncharacterized protein from Saccharomyces cerevisiae (strain ATCC 204508 / S288c) (Baker's yeast).